The primary structure comprises 314 residues: Pectin lyase (314 aa).

Arginine 202 is a catalytic residue.

Belongs to the polysaccharide lyase 1 family.

The catalysed reaction is Eliminative cleavage of (1-&gt;4)-alpha-D-galacturonan methyl ester to give oligosaccharides with 4-deoxy-6-O-methyl-alpha-D-galact-4-enuronosyl groups at their non-reducing ends.. The sequence is that of Pectin lyase (pnl) from Pectobacterium carotovorum (Erwinia carotovora).